A 634-amino-acid polypeptide reads, in one-letter code: Probable potassium transport system protein Kup (634 aa).

Transmembrane regions (helical) follow at residues 21–41 (IILS…LYTL), 58–78 (VLGI…IKYV), 110–130 (IYIV…DGII), 148–168 (PHMK…LFLC), 180–200 (FGPI…YNII), 217–237 (FFLE…LAVT), 258–278 (WMYV…ALVL), 296–316 (GLYP…QALI), 348–368 (IYVP…VIGF), 377–397 (AYGV…IIYA), 408–428 (LLMI…ANII), and 432–452 (DGAW…RTWL).

The protein belongs to the HAK/KUP transporter (TC 2.A.72) family.

It localises to the cell inner membrane. It catalyses the reaction K(+)(in) + H(+)(in) = K(+)(out) + H(+)(out). Its function is as follows. Transport of potassium into the cell. Likely operates as a K(+):H(+) symporter. This Xylella fastidiosa (strain Temecula1 / ATCC 700964) protein is Probable potassium transport system protein Kup.